Consider the following 770-residue polypeptide: Serine/threonine-protein kinase PLK4 (770 aa).

The Protein kinase domain maps to 14-267 (YEVQHLLGKG…LEHVLRHPFL (254 aa)). ATP-binding positions include 20–28 (LGKGGFASV) and K43. The Proton acceptor role is filled by D138. The region spanning 383–500 (EERISVPPLN…DRFVGLVKSK (118 aa)) is the Cryptic POLO box 1 (CPB1) domain. Residues 501 to 604 (TPKVTYFSAL…GRRPVTEVQP (104 aa)) form the Cryptic POLO box 2 (CPB2) domain. A POLO box domain is found at 662-741 (PIKRINLPDI…LPHIQLKLKT (80 aa)).

Belongs to the protein kinase superfamily. Ser/Thr protein kinase family. CDC5/Polo subfamily. Homodimer. Ubiquitinated by the SCF(Slimb) ubiquitin ligase complex; leading to its degradation by the proteasome during interphase and regulating centriole number and ensuring the block to centriole reduplication.

It is found in the cytoplasm. It localises to the cytoskeleton. The protein resides in the microtubule organizing center. Its subcellular location is the centrosome. The protein localises to the centriole. The catalysed reaction is L-seryl-[protein] + ATP = O-phospho-L-seryl-[protein] + ADP + H(+). The enzyme catalyses L-threonyl-[protein] + ATP = O-phospho-L-threonyl-[protein] + ADP + H(+). In terms of biological role, serine/threonine-protein kinase that plays a central role in centriole duplication. Able to trigger procentriole formation on the surface of the mother centriole cylinder, using mother centriole as a platform, leading to the recruitment of centriole biogenesis proteins such as sas-6. When overexpressed, it is able to induce centrosome amplification through the simultaneous generation of multiple procentrioles adjoining each parental centriole during S phase. Centrosome amplification following overexpression can initiate tumorigenesis, highlighting the importance of centrosome regulation in cancers. The chain is Serine/threonine-protein kinase PLK4 (SAK) from Drosophila ananassae (Fruit fly).